Consider the following 176-residue polypeptide: MSSNQELVVLGKLGSSHGIKGWLKITSYTDSVEGIFDYSPWLIKEQGVWREVKVAQWRFQGKAVVAELEGVATREHAQMLTNCEIAIMPEQMKDLDDSEFYHRDLIGCEVTNINGYNMGIVDQIVETGSNDVLLIKANAKDAFGKAERMIPFVPEQFIKQVDLQGKQILVDWDPDF.

Positions 97-176 (DSEFYHRDLI…QILVDWDPDF (80 aa)) constitute a PRC barrel domain.

It belongs to the RimM family. Binds ribosomal protein uS19.

It is found in the cytoplasm. Its function is as follows. An accessory protein needed during the final step in the assembly of 30S ribosomal subunit, possibly for assembly of the head region. Essential for efficient processing of 16S rRNA. May be needed both before and after RbfA during the maturation of 16S rRNA. It has affinity for free ribosomal 30S subunits but not for 70S ribosomes. In Shewanella frigidimarina (strain NCIMB 400), this protein is Ribosome maturation factor RimM.